Reading from the N-terminus, the 282-residue chain is Elongation factor Ts (282 aa).

An involved in Mg(2+) ion dislocation from EF-Tu region spans residues 81-84 (TDFV). A compositionally biased stretch (low complexity) spans 218–270 (KPAQPAQVAEVAAAPPAEPVADQPAAEPPAESVAPEPVVAESADAEPAPAAEG). A disordered region spans residues 218–282 (KPAQPAQVAE…SKKGSTKKKK (65 aa)). Basic residues predominate over residues 273-282 (SKKGSTKKKK).

It belongs to the EF-Ts family.

Its subcellular location is the cytoplasm. Its function is as follows. Associates with the EF-Tu.GDP complex and induces the exchange of GDP to GTP. It remains bound to the aminoacyl-tRNA.EF-Tu.GTP complex up to the GTP hydrolysis stage on the ribosome. This is Elongation factor Ts from Synechococcus sp. (strain JA-3-3Ab) (Cyanobacteria bacterium Yellowstone A-Prime).